A 220-amino-acid polypeptide reads, in one-letter code: Ribose-5-phosphate isomerase A (220 aa).

Substrate contacts are provided by residues 25–28 (TGST), 80–83 (DGAD), and 93–96 (KGGG). Catalysis depends on Glu-102, which acts as the Proton acceptor. Lys-120 serves as a coordination point for substrate.

It belongs to the ribose 5-phosphate isomerase family. Homodimer.

It carries out the reaction aldehydo-D-ribose 5-phosphate = D-ribulose 5-phosphate. It participates in carbohydrate degradation; pentose phosphate pathway; D-ribose 5-phosphate from D-ribulose 5-phosphate (non-oxidative stage): step 1/1. In terms of biological role, catalyzes the reversible conversion of ribose-5-phosphate to ribulose 5-phosphate. In Bacillus cereus (strain ATCC 10987 / NRS 248), this protein is Ribose-5-phosphate isomerase A.